The primary structure comprises 101 residues: Phosphoribosyl-AMP cyclohydrolase (101 aa).

D71 provides a ligand contact to Mg(2+). C72 lines the Zn(2+) pocket. Residues D73 and D75 each contribute to the Mg(2+) site. The Zn(2+) site is built by C88 and C95.

This sequence belongs to the PRA-CH family. In terms of assembly, homodimer. Mg(2+) is required as a cofactor. The cofactor is Zn(2+).

The protein resides in the cytoplasm. It carries out the reaction 1-(5-phospho-beta-D-ribosyl)-5'-AMP + H2O = 1-(5-phospho-beta-D-ribosyl)-5-[(5-phospho-beta-D-ribosylamino)methylideneamino]imidazole-4-carboxamide. It participates in amino-acid biosynthesis; L-histidine biosynthesis; L-histidine from 5-phospho-alpha-D-ribose 1-diphosphate: step 3/9. Its function is as follows. Catalyzes the hydrolysis of the adenine ring of phosphoribosyl-AMP. This chain is Phosphoribosyl-AMP cyclohydrolase, found in Bacillus cereus (strain AH820).